Consider the following 206-residue polypeptide: LexA repressor (206 aa).

The H-T-H motif DNA-binding region spans 28-48 (RAEIATRLGFKSANAAEEHLK). Residues serine 123 and lysine 160 each act as for autocatalytic cleavage activity in the active site.

Belongs to the peptidase S24 family. As to quaternary structure, homodimer.

It carries out the reaction Hydrolysis of Ala-|-Gly bond in repressor LexA.. In terms of biological role, represses a number of genes involved in the response to DNA damage (SOS response), including recA and lexA. In the presence of single-stranded DNA, RecA interacts with LexA causing an autocatalytic cleavage which disrupts the DNA-binding part of LexA, leading to derepression of the SOS regulon and eventually DNA repair. The sequence is that of LexA repressor from Shewanella sp. (strain MR-4).